Consider the following 1749-residue polypeptide: Intraflagellar transport protein 172 homolog (1749 aa).

Met1 is modified (N-acetylmethionine). Lys4 is covalently cross-linked (Glycyl lysine isopeptide (Lys-Gly) (interchain with G-Cter in SUMO1)). WD repeat units lie at residues 14–53 (DGAA…RDKF), 64–103 (RKSY…GDKK), 110–148 (IQTS…SSTI), 150–191 (GTES…ESQG), 195–233 (NHPC…QTFD), 238–278 (PQER…WEEA), 284–323 (ANLY…SIYK), 483–520 (SHES…CSKT), and 521–559 (MILN…ERVT). A TPR 1 repeat occupies 593–624 (DEGLIEFGTAIDDGNYTRATAFLETLEMTPET). Arg672 is subject to Omega-N-methylarginine. TPR repeat units lie at residues 692 to 725 (EKNY…EECI), 809 to 842 (GELY…MKAV), 854 to 887 (VRLE…IKAI), 912 to 945 (SKYY…KDAI), 947 to 970 (MYTQ…PEDV), 971 to 1004 (SVLY…DLAI), 1042 to 1075 (EGRL…EEAY), 1142 to 1175 (PEIH…KEAV), 1276 to 1309 (VEGL…GSSG), 1345 to 1378 (IGKH…NKAK), 1411 to 1445 (GVDV…LHKY), 1447 to 1477 (ALYA…NPQN), and 1574 to 1607 (DKAF…TDAI).

It belongs to the IFT172 family. Interacts with IFT88. Interacts with IFT57. Interacts with RABL2/RABL2A; binds preferentially to GDP-bound RABL2. Co-localizes with RABL2/RABL2A in the midpiece of elongated spermatids within the testis (at protein level). Expressed in the flagellum of elongated spermatids and sperm in the testis lumen (at protein level).

The protein localises to the cell projection. Its subcellular location is the cilium. Its function is as follows. Required for the maintenance and formation of cilia. Plays an indirect role in hedgehog (Hh) signaling, cilia being required for all activity of the hedgehog pathway. In Mus musculus (Mouse), this protein is Intraflagellar transport protein 172 homolog (Ift172).